Reading from the N-terminus, the 112-residue chain is uncharacterized protein (112 aa).

The tract at residues 91-112 (ENQRKKGTRKRRSSEVDSKEKS) is disordered. Over residues 103–112 (SSEVDSKEKS) the composition is skewed to basic and acidic residues.

This is an uncharacterized protein from Caenorhabditis elegans.